Here is a 120-residue protein sequence, read N- to C-terminus: Reprimo-like protein (120 aa).

Residues 67 to 87 traverse the membrane as a helical segment; that stretch reads VAQIAVLCVLSLTVVFGVFFL. At Ser109 the chain carries Phosphoserine.

The protein belongs to the reprimo family.

The protein resides in the membrane. This is Reprimo-like protein (RPRML) from Homo sapiens (Human).